We begin with the raw amino-acid sequence, 155 residues long: 2-C-methyl-D-erythritol 2,4-cyclodiphosphate synthase (155 aa).

Residues Asp8 and His10 each contribute to the a divalent metal cation site. 4-CDP-2-C-methyl-D-erythritol 2-phosphate-binding positions include 8–10 and 34–35; these read DVH and HS. Residue His42 coordinates a divalent metal cation. Residues 56–58, 61–65, 100–106, 132–135, Phe139, and Lys142 contribute to the 4-CDP-2-C-methyl-D-erythritol 2-phosphate site; these read DIG, FPDSD, AQKPKML, and TTEE.

Belongs to the IspF family. Homotrimer. It depends on a divalent metal cation as a cofactor.

The enzyme catalyses 4-CDP-2-C-methyl-D-erythritol 2-phosphate = 2-C-methyl-D-erythritol 2,4-cyclic diphosphate + CMP. The protein operates within isoprenoid biosynthesis; isopentenyl diphosphate biosynthesis via DXP pathway; isopentenyl diphosphate from 1-deoxy-D-xylulose 5-phosphate: step 4/6. Functionally, involved in the biosynthesis of isopentenyl diphosphate (IPP) and dimethylallyl diphosphate (DMAPP), two major building blocks of isoprenoid compounds. Catalyzes the conversion of 4-diphosphocytidyl-2-C-methyl-D-erythritol 2-phosphate (CDP-ME2P) to 2-C-methyl-D-erythritol 2,4-cyclodiphosphate (ME-CPP) with a corresponding release of cytidine 5-monophosphate (CMP). In Clostridium botulinum (strain Okra / Type B1), this protein is 2-C-methyl-D-erythritol 2,4-cyclodiphosphate synthase.